Here is a 135-residue protein sequence, read N- to C-terminus: MPSVSVWVRSLAPMTTWTRAAIGALGEDLAVKHLDSLGMRVLERNWRCRYGELDVIAEDPAARAVVFVEVKTRTTDHFGGVAEAVTPQKVRRLRRLAGLWLAGRDERWAAVRIDVIGVRIGRQATPEITHLTGVA.

The protein belongs to the UPF0102 family.

In Mycobacterium sp. (strain KMS), this protein is UPF0102 protein Mkms_2031.